Consider the following 65-residue polypeptide: Large ribosomal subunit protein bL35 (65 aa).

The protein belongs to the bacterial ribosomal protein bL35 family.

The chain is Large ribosomal subunit protein bL35 from Aromatoleum aromaticum (strain DSM 19018 / LMG 30748 / EbN1) (Azoarcus sp. (strain EbN1)).